The chain runs to 447 residues: Tubulin beta-1 chain (447 aa).

Q11, E69, S138, G142, T143, G144, N204, and N226 together coordinate GTP. A Mg(2+)-binding site is contributed by E69. Polar residues predominate over residues 411-427 (AESNMNDLVSEYQQYQD). Positions 411–447 (AESNMNDLVSEYQQYQDATADEEGDYEDEEEQVPEDE) are disordered. The segment covering 429-447 (TADEEGDYEDEEEQVPEDE) has biased composition (acidic residues).

It belongs to the tubulin family. As to quaternary structure, dimer of alpha and beta chains. A typical microtubule is a hollow water-filled tube with an outer diameter of 25 nm and an inner diameter of 15 nM. Alpha-beta heterodimers associate head-to-tail to form protofilaments running lengthwise along the microtubule wall with the beta-tubulin subunit facing the microtubule plus end conferring a structural polarity. Microtubules usually have 13 protofilaments but different protofilament numbers can be found in some organisms and specialized cells. Mg(2+) serves as cofactor. In terms of tissue distribution, expressed in leaf sheaths.

It localises to the cytoplasm. Its subcellular location is the cytoskeleton. Its function is as follows. Tubulin is the major constituent of microtubules, a cylinder consisting of laterally associated linear protofilaments composed of alpha- and beta-tubulin heterodimers. Microtubules grow by the addition of GTP-tubulin dimers to the microtubule end, where a stabilizing cap forms. Below the cap, tubulin dimers are in GDP-bound state, owing to GTPase activity of alpha-tubulin. The protein is Tubulin beta-1 chain (TUBB1) of Oryza sativa subsp. japonica (Rice).